The primary structure comprises 353 residues: Ferredoxin--NADP reductase (353 aa).

The FAD site is built by Asp33, Gln41, Tyr46, Val86, Phe121, Asp293, and Thr333.

It belongs to the ferredoxin--NADP reductase type 2 family. Homodimer. FAD is required as a cofactor.

The enzyme catalyses 2 reduced [2Fe-2S]-[ferredoxin] + NADP(+) + H(+) = 2 oxidized [2Fe-2S]-[ferredoxin] + NADPH. The chain is Ferredoxin--NADP reductase from Verminephrobacter eiseniae (strain EF01-2).